The chain runs to 72 residues: Metallothionein-like protein 1B (72 aa).

Belongs to the metallothionein superfamily. Type 15 family. Expressed in leaves of mature plants.

Metallothioneins have a high content of cysteine residues that bind various heavy metals. Functions as a metal chelator of nickel (Ni), cadmium (Cd), zinc (Zn) and copper (Cu). Possesses higher affinity for Ni and Cd ions compared to Zn and Cu ions. The polypeptide is Metallothionein-like protein 1B (MT1B) (Oryza sativa subsp. japonica (Rice)).